Here is a 359-residue protein sequence, read N- to C-terminus: Protein FLX-like 2 (359 aa).

Residues 1–16 (MESKGRIHPSHHHMRR) are compositionally biased toward basic residues. The segment at 1-27 (MESKGRIHPSHHHMRRPLPGPGGCIAH) is disordered. Residues 83–236 (HGSLRQELAA…EKLQAQLMNN (154 aa)) adopt a coiled-coil conformation. A disordered region spans residues 303 to 359 (TQPGYFPQRPGYNFPRGPPGSYDPTTRLPTGPYGAPFPPGPSNNTPYAGTHGNPSRR).

Belongs to the FLX family. As to quaternary structure, interacts with FRI.

Functionally, has no transcriptional activation activity. The chain is Protein FLX-like 2 (FLXL2) from Arabidopsis thaliana (Mouse-ear cress).